Reading from the N-terminus, the 208-residue chain is Small ribosomal subunit protein uS4 (208 aa).

The interval 31 to 51 (SALDKRAYGPGQHGQRRAKTS) is disordered. An S4 RNA-binding domain is found at 98–156 (RRLDNVVYRMGFATTRSSARQLVTHGHVLVDGKRLDIPSYFVRSGQKIEIKEKTKSNPQ).

This sequence belongs to the universal ribosomal protein uS4 family. In terms of assembly, part of the 30S ribosomal subunit. Contacts protein S5. The interaction surface between S4 and S5 is involved in control of translational fidelity.

In terms of biological role, one of the primary rRNA binding proteins, it binds directly to 16S rRNA where it nucleates assembly of the body of the 30S subunit. Functionally, with S5 and S12 plays an important role in translational accuracy. The chain is Small ribosomal subunit protein uS4 from Helicobacter pylori (strain HPAG1).